We begin with the raw amino-acid sequence, 376 residues long: Alcohol dehydrogenase class-3 (376 aa).

Residue Ala-1 is modified to N-acetylalanine. Positions 47, 69, 99, 102, 105, 113, and 176 each coordinate Zn(2+).

It belongs to the zinc-containing alcohol dehydrogenase family. Class-III subfamily. In terms of assembly, homodimer. Zn(2+) is required as a cofactor.

The protein localises to the cytoplasm. The catalysed reaction is a primary alcohol + NAD(+) = an aldehyde + NADH + H(+). It carries out the reaction a secondary alcohol + NAD(+) = a ketone + NADH + H(+). It catalyses the reaction S-(hydroxymethyl)glutathione + NADP(+) = S-formylglutathione + NADPH + H(+). The enzyme catalyses S-(hydroxymethyl)glutathione + NAD(+) = S-formylglutathione + NADH + H(+). The catalysed reaction is S-nitrosoglutathione + NADH + H(+) = S-(hydroxysulfenamide)glutathione + NAD(+). Its function is as follows. Class-III ADH is remarkably ineffective in oxidizing ethanol, but it readily catalyzes the oxidation of long-chain primary alcohols and the oxidation of S-(hydroxymethyl) glutathione. Also acts as a S-nitroso-glutathione reductase by catalyzing the NADH-dependent reduction of S-nitrosoglutathione, thereby regulating protein S-nitrosylation. This is Alcohol dehydrogenase class-3 from Scyliorhinus canicula (Small-spotted catshark).